The primary structure comprises 78 residues: Large ribosomal subunit protein bL28 (78 aa).

Residues 1–22 (MAKVCQVTGKRPVTGHNVSHAK) are disordered.

Belongs to the bacterial ribosomal protein bL28 family.

The sequence is that of Large ribosomal subunit protein bL28 from Teredinibacter turnerae (strain ATCC 39867 / T7901).